We begin with the raw amino-acid sequence, 539 residues long: MHDKILILDFGSQVTQLIARRVREAHVYCEIHPNDVSDDFVREFAPKAVILSGSHASTYEDHQLRAPQAVWDLGVPVLGICYGMQTMAVQLGGKVEWSDHREFGYAEMRAHGHTRLLDGIEDFTTAEGHGMLKVWMSHGDKVAELPPGFALMASTPSCPIAGMADEARGYYAVQFHPEVTHTVKGRQIIERFVLQIAGAKPDWIMKNHIEEAVAKIREQVGDEEVILGLSGGVDSSVAAALIHRAIGDQLTCVFVDHGLLRLNEGKMVLDMFEGRLHAKVVHVDASDQFLGHLAGVTDPEAKRKIIGREFVEVFQAEAKKLSKAKWLAQGTIYPDVVESGGTKTKKATTIKSHHNVGGLPETLGLKLLEPLRDLFKDEVRELGVALGLPPEMVYRHPFPGPGLGVRILGEVKREYAELLRRADAIFIEELRNTTATAQDAAAGLCGEADVGKSWYDLTSQAFAVFLPVKSVGVMGDGRTYDYVTSLRAVQTTDFMTAHWAHLPYALLGRASNRIINEVRGINRVVYDISGKPPATIEWE.

The Glutamine amidotransferase type-1 domain occupies 4–202 (KILILDFGSQ…VLQIAGAKPD (199 aa)). The Nucleophile role is filled by Cys81. Residues His176 and Glu178 contribute to the active site. The GMPS ATP-PPase domain maps to 203–395 (WIMKNHIEEA…LGLPPEMVYR (193 aa)). 230 to 236 (SGGVDSS) provides a ligand contact to ATP.

In terms of assembly, homodimer.

The enzyme catalyses XMP + L-glutamine + ATP + H2O = GMP + L-glutamate + AMP + diphosphate + 2 H(+). Its pathway is purine metabolism; GMP biosynthesis; GMP from XMP (L-Gln route): step 1/1. Functionally, catalyzes the synthesis of GMP from XMP. The sequence is that of GMP synthase [glutamine-hydrolyzing] from Burkholderia orbicola (strain AU 1054).